A 121-amino-acid polypeptide reads, in one-letter code: MGTPEGIDVITVVISEAPYGQERAYTALRFALTALVEGEEVKIFLIEDGVFLGKKGQNPDEVPNYLELLEQCIEQGAEVKACGPCSKARGLSEEDFIEGVELATMHDLVNWVKESDNVIFF.

This sequence to M.jannaschii MJ0989.

This is an uncharacterized protein from Methanopyrus kandleri (strain AV19 / DSM 6324 / JCM 9639 / NBRC 100938).